We begin with the raw amino-acid sequence, 98 residues long: MALTKAEMSEHLFEKLGLSKRDAKDLVELFFEEVRRALENGEQVKLSGFGNFDLRDKNQRPGRNPKTGEDIPITARRVVTFRPGQKLKSRVESATPKE.

The interval Phe49 to Asp70 is disordered.

Belongs to the bacterial histone-like protein family. In terms of assembly, heterodimer of an alpha and a beta chain.

This protein is one of the two subunits of integration host factor, a specific DNA-binding protein that functions in genetic recombination as well as in transcriptional and translational control. The sequence is that of Integration host factor subunit alpha from Yersinia pestis.